A 99-amino-acid polypeptide reads, in one-letter code: Large ribosomal subunit protein P1 (99 aa).

In terms of assembly, part of the 50S ribosomal subunit. Homodimer, it forms part of the ribosomal stalk which helps the ribosome interact with GTP-bound translation factors. Forms both a pentameric uL10/P0(P1)2(P1)2 and heptameric uL10/P0(P1)2(P1)2(P1)2 complex, where uL10/P0 forms an elongated spine to which the P1 dimers bind in a sequential fashion. The proportion of heptameric complexes increases during cell growth.

Functionally, forms part of the ribosomal stalk, playing a central role in the interaction of the ribosome with GTP-bound translation factors. The sequence is that of Large ribosomal subunit protein P1 from Methanococcus vannielii.